Consider the following 507-residue polypeptide: Maturase K (507 aa).

This sequence belongs to the intron maturase 2 family. MatK subfamily.

The protein localises to the plastid. It localises to the chloroplast. Its function is as follows. Usually encoded in the trnK tRNA gene intron. Probably assists in splicing its own and other chloroplast group II introns. The polypeptide is Maturase K (Ranunculus macranthus (Large buttercup)).